An 811-amino-acid chain; its full sequence is DEAD-box ATP-dependent RNA helicase 48 (811 aa).

2 disordered regions span residues 1-32 (MGGG…ERGL) and 93-138 (DDGP…EPRL). Residues 15–29 (WQHKRMHEKLARHKE) are compositionally biased toward basic residues. 2 stretches are compositionally biased toward basic and acidic residues: residues 95–104 (GPIHRADRPR) and 117–138 (GDRR…EPRL). Residues 286 to 333 (RNCDMKKERRALKSYEEENNDLAGSFRELREEIKNREVLGAERRRYES) adopt a coiled-coil conformation. The Q motif signature appears at 342–370 (KRFEECGISPLTVKALTDAGYVQTTVVQE). In terms of domain architecture, Helicase ATP-binding spans 373-556 (LPMCLEGKDV…QLVLKRDHVF (184 aa)). 386 to 393 (AKTGTGKS) lines the ATP pocket. The short motif at 504–507 (DEAD) is the DEAD box element. One can recognise a Helicase C-terminal domain in the interval 570–740 (KVEQLYLVMP…EMKRKVDGSI (171 aa)).

It belongs to the DEAD box helicase family.

It catalyses the reaction ATP + H2O = ADP + phosphate + H(+). The sequence is that of DEAD-box ATP-dependent RNA helicase 48 from Oryza sativa subsp. japonica (Rice).